The chain runs to 253 residues: Zinc finger protein JAGGED (253 aa).

The interval 1–46 (MRHEENYLDLNNLPDDFSKDGNKQALEEGSSSGQRKKKGSKEGKDE) is disordered. Residues 16–26 (DFSKDGNKQAL) are compositionally biased toward basic and acidic residues. A C2H2-type zinc finger spans residues 51 to 73 (YECRFCSLKFCKSQALGGHMNRH).

As to quaternary structure, interacts with GATA18/HAN. Expressed in the emerging leaf, sepal, petal, stamen and carpel primordia. Not expressed in the apical shoot meristem (SAM).

It localises to the nucleus. Controls the morphogenesis of lateral organs. Functions in lateral organ shape and is sufficient to induce proliferation and growth of lateral organ tissue. Is necessary and sufficient for bract formation, but its expression is excluded from the cryptic bract, which could be a cause of bractless flowers in Arabidopsis. Participates with FIL and YAB3 in regulating valve margin development. Functions with JGL to define stamen and carpel shape. Functions with AS1 and AS2 in the sepal and petal primordia to repress boundary-specifying genes for normal development of the organs. This chain is Zinc finger protein JAGGED (JAG), found in Arabidopsis thaliana (Mouse-ear cress).